We begin with the raw amino-acid sequence, 551 residues long: Serine/threonine-protein kinase ppk21 (551 aa).

A disordered region spans residues 24–43 (EARGERNPVKPQSSNVVPGT). Residues 55–315 (YVFGDIIGDG…TQQIKQFPFF (261 aa)) form the Protein kinase domain. Residues 65–67 (SFS) and Lys-84 contribute to the ATP site. A PIF-pocket region spans residues 86–131 (LDKKYIVKENKVKYVNIERDSMMRLNGFPGISRLFHTFQDDLKLYY). Residues 134 to 136 (ELA) and Glu-140 each bind ATP. Catalysis depends on Asp-179, which acts as the Proton acceptor. Positions 183 and 197 each coordinate ATP. Phosphoserine; by autocatalysis is present on Ser-220. Position 538 is a phosphoserine (Ser-538).

Belongs to the protein kinase superfamily. AGC Ser/Thr protein kinase family. PDPK1 subfamily.

The protein localises to the cytoplasm. It is found in the nucleus. The protein resides in the cytoskeleton. It localises to the microtubule organizing center. Its subcellular location is the spindle pole body. It carries out the reaction L-seryl-[protein] + ATP = O-phospho-L-seryl-[protein] + ADP + H(+). The catalysed reaction is L-threonyl-[protein] + ATP = O-phospho-L-threonyl-[protein] + ADP + H(+). The protein is Serine/threonine-protein kinase ppk21 (ppk21) of Schizosaccharomyces pombe (strain 972 / ATCC 24843) (Fission yeast).